The following is a 416-amino-acid chain: CapZ-interacting protein (416 aa).

Disordered stretches follow at residues 1-84 (MEER…KSSP) and 98-416 (AALL…DTKM). A compositionally biased stretch (polar residues) spans 8-20 (TNANVDNSASPSV). S17 bears the Phosphoserine mark. S68 carries the phosphoserine; by MAPK8; in vitro modification. The residue at position 82 (S82) is a Phosphoserine. S83 is modified (phosphoserine; by MAPK8; in vitro). S105 carries the post-translational modification Phosphoserine. Position 108 is a phosphoserine; by MAPK12 and MAPK13 (S108). S116, S120, and S123 each carry phosphoserine. T124 bears the Phosphothreonine mark. 4 positions are modified to phosphoserine: S126, S127, S135, and S143. A compositionally biased stretch (basic residues) spans 159–176 (VRTRGSIKRRPPSRRFRR). S177 is subject to Phosphoserine. The residue at position 179 (S179) is a Phosphoserine; by MAPKAPK2 and MAPKAPK3. S216 carries the post-translational modification Phosphoserine; by MAPK8; in vitro. Residues 227–330 (GVRTLGPAEK…RVQNEEVGPE (104 aa)) enclose the RCSD domain. The residue at position 244 (S244) is a Phosphoserine; by MAPKAPK2 or MAPKAPK3; in vitro. Over residues 244 to 273 (SRTEKQEEDRATEEAKNGEKARRSSEEVDG) the composition is skewed to basic and acidic residues. A phosphoserine mark is found at S267, S268, S284, S298, and S333. Residues 292–349 (AENRCGSPREEKPAGEEAEMEKATEVKGERVQNEEVGPEHDSQETKKLEEGAAVKETP) are compositionally biased toward basic and acidic residues. Residue T336 is modified to Phosphothreonine. S351 bears the Phosphoserine mark. The span at 360–372 (DVPKQEKGKEKQQ) shows a compositional bias: basic and acidic residues. The span at 382 to 397 (SPQTGPAQLETSSEVQ) shows a compositional bias: polar residues.

As to quaternary structure, interacts with CAPZA2 and CAPZB. In terms of processing, dephosphorylation results in its dissociation from CAPZA2. In terms of tissue distribution, highly expressed in skeletal muscle and more weakly in cardiac muscle. Also expressed in several lymphoid organs, including spleen, thymus, peripheral blood leukocytes, lymph node and bone marrow.

Functionally, stress-induced phosphorylation of CAPZIP may regulate the ability of F-actin-capping protein to remodel actin filament assembly. The protein is CapZ-interacting protein (RCSD1) of Homo sapiens (Human).